Consider the following 102-residue polypeptide: Mitochondrial import inner membrane translocase subunit Tim10 B (102 aa).

The short motif at 27–51 is the Twin CX3C motif element; sequence CFQRCVPSLHHRALDAEEEACLHSC. Disulfide bonds link Cys-27–Cys-51 and Cys-31–Cys-47.

Component of the TIM22 complex, which core is composed of TIMM22, associated with TIMM10 (TIMM10A and/or TIMM10B), TIMM9, AGK and TIMM29.

It localises to the mitochondrion inner membrane. Its function is as follows. Component of the TIM22 complex, a complex that mediates the import and insertion of multi-pass transmembrane proteins into the mitochondrial inner membrane. The TIM22 complex forms a twin-pore translocase that uses the membrane potential as the external driving force. In the TIM22 complex, it may act as a docking point for the soluble 70 kDa complex that guides the target proteins in transit through the aqueous mitochondrial intermembrane space. The polypeptide is Mitochondrial import inner membrane translocase subunit Tim10 B (TIMM10B) (Pongo abelii (Sumatran orangutan)).